The chain runs to 284 residues: Tropomyosin alpha-1 chain (284 aa).

Position 1 is an N-acetylmethionine (M1). The interval 1 to 38 (MDAIKKKMQMLKLDKENALDRAEQAEADKKAAEDRSKQ) is disordered. A coiled-coil region spans residues 1-284 (MDAIKKKMQM…DHALNDMTSI (284 aa)). The segment covering 12 to 38 (KLDKENALDRAEQAEADKKAAEDRSKQ) has biased composition (basic and acidic residues). Phosphoserine is present on residues A31, S45, and K51. The disordered stretch occupies residues 116 to 136 (AEKAADESERGMKVIESRAQK). Residues S174, S186, and S206 each carry the phosphoserine modification. At K213 the chain carries N6-acetyllysine. S252 carries the post-translational modification Phosphoserine. A Phosphotyrosine modification is found at Y261. At S271 the chain carries Phosphoserine. S283 is subject to Phosphoserine; by DAPK1.

Belongs to the tropomyosin family. As to quaternary structure, homodimer. Heterodimer of an alpha (TPM1, TPM3 or TPM4) and a beta (TPM2) chain. Interacts with HRG (via the HRR domain); the interaction contributes to the antiangiogenic properties of the histidine/proline-rich region (HRR) of HRG. Interacts (via N-terminus) with LMOD2 (via N-terminus) and TMOD1 (via N-terminus). Post-translationally, phosphorylated at Ser-283 by DAPK1 in response to oxidative stress and this phosphorylation enhances stress fiber formation in endothelial cells. In terms of tissue distribution, detected in primary breast cancer tissues but undetectable in normal breast tissues in Sudanese patients. Isoform 1 is expressed in adult and fetal skeletal muscle and cardiac tissues, with higher expression levels in the cardiac tissues. Isoform 10 is expressed in adult and fetal cardiac tissues, but not in skeletal muscle.

The protein resides in the cytoplasm. The protein localises to the cytoskeleton. Binds to actin filaments in muscle and non-muscle cells. Plays a central role, in association with the troponin complex, in the calcium dependent regulation of vertebrate striated muscle contraction. Smooth muscle contraction is regulated by interaction with caldesmon. In non-muscle cells is implicated in stabilizing cytoskeleton actin filaments. The chain is Tropomyosin alpha-1 chain (TPM1) from Homo sapiens (Human).